A 191-amino-acid chain; its full sequence is dTTP/UTP pyrophosphatase (191 aa).

Asp68 (proton acceptor) is an active-site residue.

Belongs to the Maf family. YhdE subfamily. A divalent metal cation is required as a cofactor.

It is found in the cytoplasm. The enzyme catalyses dTTP + H2O = dTMP + diphosphate + H(+). The catalysed reaction is UTP + H2O = UMP + diphosphate + H(+). Functionally, nucleoside triphosphate pyrophosphatase that hydrolyzes dTTP and UTP. May have a dual role in cell division arrest and in preventing the incorporation of modified nucleotides into cellular nucleic acids. The chain is dTTP/UTP pyrophosphatase from Thermoanaerobacter pseudethanolicus (strain ATCC 33223 / 39E) (Clostridium thermohydrosulfuricum).